The primary structure comprises 194 residues: Fe/S biogenesis protein NfuA (194 aa).

[4Fe-4S] cluster-binding residues include cysteine 152 and cysteine 155.

This sequence belongs to the NfuA family. Homodimer. The cofactor is [4Fe-4S] cluster.

Its function is as follows. Involved in iron-sulfur cluster biogenesis. Binds a 4Fe-4S cluster, can transfer this cluster to apoproteins, and thereby intervenes in the maturation of Fe/S proteins. Could also act as a scaffold/chaperone for damaged Fe/S proteins. In Ectopseudomonas mendocina (strain ymp) (Pseudomonas mendocina), this protein is Fe/S biogenesis protein NfuA.